The following is a 67-amino-acid chain: (2R)-sulfolactate sulfo-lyase subunit alpha (67 aa).

In terms of assembly, (2R)-sulfolactate sulfo-lyase is composed of a SuyA and a SuyB subunit.

It is found in the cytoplasm. The catalysed reaction is (2R)-3-sulfolactate = sulfite + pyruvate + H(+). Its function is as follows. Together with SuyB, desulfonates sulfolactate to pyruvate and sulfite. This Paracoccus pantotrophus (Thiosphaera pantotropha) protein is (2R)-sulfolactate sulfo-lyase subunit alpha (suyA).